The chain runs to 257 residues: S-methyl-5'-thioadenosine phosphorylase (257 aa).

Residues Ser10 and 50–51 contribute to the phosphate site; that span reads RH. Met180 lines the substrate pocket. Thr181 lines the phosphate pocket. 204–206 provides a ligand contact to substrate; the sequence is DYD.

It belongs to the PNP/MTAP phosphorylase family. MTAP subfamily. As to quaternary structure, homohexamer. Dimer of a homotrimer.

The catalysed reaction is S-methyl-5'-thioadenosine + phosphate = 5-(methylsulfanyl)-alpha-D-ribose 1-phosphate + adenine. Its pathway is amino-acid biosynthesis; L-methionine biosynthesis via salvage pathway; S-methyl-5-thio-alpha-D-ribose 1-phosphate from S-methyl-5'-thioadenosine (phosphorylase route): step 1/1. Functionally, catalyzes the reversible phosphorylation of S-methyl-5'-thioadenosine (MTA) to adenine and 5-methylthioribose-1-phosphate. Involved in the breakdown of MTA, a major by-product of polyamine biosynthesis. Responsible for the first step in the methionine salvage pathway after MTA has been generated from S-adenosylmethionine. Has broad substrate specificity with 6-aminopurine nucleosides as preferred substrates. The sequence is that of S-methyl-5'-thioadenosine phosphorylase from Pyrococcus horikoshii (strain ATCC 700860 / DSM 12428 / JCM 9974 / NBRC 100139 / OT-3).